Reading from the N-terminus, the 220-residue chain is Splicing factor U2AF 26 kDa subunit (220 aa).

Alanine 2 is subject to N-acetylalanine. The segment at glutamate 12–proline 40 adopts a C3H1-type 1 zinc-finger fold. The 83-residue stretch at serine 65 to valine 147 folds into the RRM domain. The segment at aspartate 149 to proline 176 adopts a C3H1-type 2 zinc-finger fold. Residues tyrosine 186–phenylalanine 220 are disordered. The span at glycine 189–phenylalanine 220 shows a compositional bias: basic residues.

Belongs to the splicing factor SR family. Interacts with GFI1, U2AF2 and C1QBP. Isoform 3 interacts with PER1. Post-translationally, isoform 3 is rapidly degraded by a proteasome-mediated degradation pathway. In terms of tissue distribution, ubiquitous. Highly expressed in the brain.

The protein localises to the nucleus. Its subcellular location is the nucleus speckle. It is found in the cytoplasm. Functionally, RNA-binding protein that function as a pre-mRNA splicing factor. Plays a critical role in both constitutive and enhancer-dependent splicing by mediating protein-protein interactions and protein-RNA interactions required for accurate 3'-splice site selection. It can functionally substitute for U2AF1 in constitutive splicing and enhancer-dependent splicing. Acts by enhancing the binding of U2AF2 to weak pyrimidine tracts. Also participates in the regulation of alternative pre-mRNA splicing. Activates exon 5 skipping of PTPRC during T-cell activation; an event reversed by GFI1. Binds to RNA at the AG dinucleotide at the 3'-splice site. Shows a preference for AGC or AGA. Alternative splicing of U2AF1L4 may play a role in connecting the circadian rhythm to changing external cues: may provide a circadian buffering system in central and periphery clocks that allows synchronized adaption to clock-resetting stimuli in order to prevent potentially pathogenic desynchronization. The protein is Splicing factor U2AF 26 kDa subunit (U2af1l4) of Mus musculus (Mouse).